The sequence spans 334 residues: Holliday junction branch migration complex subunit RuvB (334 aa).

The segment at 4 to 184 is large ATPase domain (RuvB-L); that stretch reads EDRLISGTQK…FGIVQRLEYY (181 aa). Residues Ile23, Arg24, Gly65, Lys68, Thr69, Thr70, 131 to 133, Arg174, Tyr184, and Arg221 contribute to the ATP site; that span reads EDY. Thr69 contacts Mg(2+). Residues 185-255 are small ATPAse domain (RuvB-S); the sequence is DLKSLTRIVL…VAKLALDMLE (71 aa). The head domain (RuvB-H) stretch occupies residues 258-334; that stretch reads NEGFDYMDRK…YLHFGFDKPQ (77 aa). Residues Arg313 and Arg318 each contribute to the DNA site.

This sequence belongs to the RuvB family. In terms of assembly, homohexamer. Forms an RuvA(8)-RuvB(12)-Holliday junction (HJ) complex. HJ DNA is sandwiched between 2 RuvA tetramers; dsDNA enters through RuvA and exits via RuvB. An RuvB hexamer assembles on each DNA strand where it exits the tetramer. Each RuvB hexamer is contacted by two RuvA subunits (via domain III) on 2 adjacent RuvB subunits; this complex drives branch migration. In the full resolvosome a probable DNA-RuvA(4)-RuvB(12)-RuvC(2) complex forms which resolves the HJ.

It is found in the cytoplasm. The enzyme catalyses ATP + H2O = ADP + phosphate + H(+). Functionally, the RuvA-RuvB-RuvC complex processes Holliday junction (HJ) DNA during genetic recombination and DNA repair, while the RuvA-RuvB complex plays an important role in the rescue of blocked DNA replication forks via replication fork reversal (RFR). RuvA specifically binds to HJ cruciform DNA, conferring on it an open structure. The RuvB hexamer acts as an ATP-dependent pump, pulling dsDNA into and through the RuvAB complex. RuvB forms 2 homohexamers on either side of HJ DNA bound by 1 or 2 RuvA tetramers; 4 subunits per hexamer contact DNA at a time. Coordinated motions by a converter formed by DNA-disengaged RuvB subunits stimulates ATP hydrolysis and nucleotide exchange. Immobilization of the converter enables RuvB to convert the ATP-contained energy into a lever motion, pulling 2 nucleotides of DNA out of the RuvA tetramer per ATP hydrolyzed, thus driving DNA branch migration. The RuvB motors rotate together with the DNA substrate, which together with the progressing nucleotide cycle form the mechanistic basis for DNA recombination by continuous HJ branch migration. Branch migration allows RuvC to scan DNA until it finds its consensus sequence, where it cleaves and resolves cruciform DNA. This is Holliday junction branch migration complex subunit RuvB from Psychromonas ingrahamii (strain DSM 17664 / CCUG 51855 / 37).